Reading from the N-terminus, the 432-residue chain is Adenylosuccinate synthetase (432 aa).

Residues 12 to 18 and 40 to 42 contribute to the GTP site; these read GDEGKGK and GHT. Catalysis depends on D13, which acts as the Proton acceptor. Mg(2+) contacts are provided by D13 and G40. Residues 13 to 16, 38 to 41, T130, R144, Q226, T241, and R305 each bind IMP; these read DEGK and NAGH. H41 serves as the catalytic Proton donor. 301–307 is a binding site for substrate; sequence STTGRSR. Residues R307, 333 to 335, and 415 to 417 each bind GTP; these read KLD and SVG.

Belongs to the adenylosuccinate synthetase family. In terms of assembly, homodimer. Mg(2+) serves as cofactor.

The protein localises to the cytoplasm. It carries out the reaction IMP + L-aspartate + GTP = N(6)-(1,2-dicarboxyethyl)-AMP + GDP + phosphate + 2 H(+). The protein operates within purine metabolism; AMP biosynthesis via de novo pathway; AMP from IMP: step 1/2. In terms of biological role, plays an important role in the de novo pathway of purine nucleotide biosynthesis. Catalyzes the first committed step in the biosynthesis of AMP from IMP. The polypeptide is Adenylosuccinate synthetase (Bdellovibrio bacteriovorus (strain ATCC 15356 / DSM 50701 / NCIMB 9529 / HD100)).